A 148-amino-acid chain; its full sequence is Prefoldin subunit 2 (148 aa).

Residues Lys87 to Lys114 are a coiled coil. Basic and acidic residues predominate over residues Gln122–Gly134. The interval Gln122–Gln148 is disordered.

Belongs to the prefoldin subunit beta family. In terms of assembly, heterohexamer of two PFD-alpha type and four PFD-beta type subunits forming prefoldin co-chaperone complex. Interacts with LSM8, a specific subunit of the LSM2-8 complex, which is a core component of the spliceosome.

It localises to the cytoplasm. The protein localises to the nucleus. Its function is as follows. Binds specifically to cytosolic chaperonin (c-CPN) and transfers target proteins to it. Binds to nascent polypeptide chain and promotes folding in an environment in which there are many competing pathways for nonnative proteins. Together with other chaperonins, contribute to the regulation of gene expression by modulating the spliceosome function on pre-mRNA splicing post-transcriptionally by acting as a co-chaperone of Hsp90 to control levels of LSM8. Required for microtubules (MTs) organization and dynamicity. Involved in the process leading to microtubules dissociation in response to gibberellic acid (GA) probably due to the DELLA proteins-mediated translocation of the prefoldin co-chaperone complex from the cytoplasm to the nucleus. The chain is Prefoldin subunit 2 from Arabidopsis thaliana (Mouse-ear cress).